The primary structure comprises 628 residues: Netrin-4 (628 aa).

A signal peptide spans 1–18; sequence MGSCARLLLLWGCTVVAA. Residues 30 to 261 enclose the Laminin N-terminal domain; that stretch reads CEKACNPRMG…AIYDFIVKGS (232 aa). 2 N-linked (GlcNAc...) asparagine glycosylation sites follow: N56 and N163. Disulfide bonds link C262–C271, C264–C293, C295–C304, C307–C329, C332–C341, C334–C359, C362–C371, C374–C392, C395–C413, C397–C420, C422–C431, and C434–C446. Laminin EGF-like domains are found at residues 262-331, 332-394, and 395-448; these read CFCN…ECRT, CKCN…ACKP, and CSCH…GCRP. N353 carries N-linked (GlcNAc...) asparagine glycosylation. N483 is a glycosylation site (N-linked (GlcNAc...) asparagine). Disulfide bonds link C506-C576 and C520-C627. An NTR domain is found at 506 to 627; that stretch reads CECKEQTLGN…KVMDILKREC (122 aa).

In terms of assembly, may form a homodimer. Expressed in kidney, spleen, mammary gland, aorta, heart, ovary, prostate and fetal spleen.

It localises to the secreted. The protein localises to the extracellular space. It is found in the extracellular matrix. The protein resides in the basement membrane. Functionally, may play an important role in neural, kidney and vascular development. Promotes neurite elongation from olfactory bulb explants. This Homo sapiens (Human) protein is Netrin-4 (NTN4).